Consider the following 262-residue polypeptide: Type III pantothenate kinase (262 aa).

12–19 serves as a coordination point for ATP; that stretch reads DIGNTSIA. Substrate contacts are provided by residues Tyr-94 and 109 to 112; that span reads GSDV. Asp-111 (proton acceptor) is an active-site residue. Asp-132 contributes to the K(+) binding site. Thr-135 lines the ATP pocket. Thr-187 is a binding site for substrate.

This sequence belongs to the type III pantothenate kinase family. As to quaternary structure, homodimer. Requires NH4(+) as cofactor. K(+) is required as a cofactor.

Its subcellular location is the cytoplasm. The enzyme catalyses (R)-pantothenate + ATP = (R)-4'-phosphopantothenate + ADP + H(+). It participates in cofactor biosynthesis; coenzyme A biosynthesis; CoA from (R)-pantothenate: step 1/5. In terms of biological role, catalyzes the phosphorylation of pantothenate (Pan), the first step in CoA biosynthesis. In Borrelia garinii subsp. bavariensis (strain ATCC BAA-2496 / DSM 23469 / PBi) (Borreliella bavariensis), this protein is Type III pantothenate kinase.